Here is a 322-residue protein sequence, read N- to C-terminus: Phosphatidylserine decarboxylase proenzyme (322 aa).

Active-site charge relay system; for autoendoproteolytic cleavage activity residues include Asp-90, His-147, and Ser-254. The active-site Schiff-base intermediate with substrate; via pyruvic acid; for decarboxylase activity is Ser-254. Position 254 is a pyruvic acid (Ser); by autocatalysis (Ser-254). Positions 290–322 (FVTPDSEPAPLPAEEIEAEHDASPLVDDKKDQV) are disordered. Over residues 308–322 (EHDASPLVDDKKDQV) the composition is skewed to basic and acidic residues.

It belongs to the phosphatidylserine decarboxylase family. PSD-B subfamily. Prokaryotic type I sub-subfamily. Heterodimer of a large membrane-associated beta subunit and a small pyruvoyl-containing alpha subunit. It depends on pyruvate as a cofactor. Post-translationally, is synthesized initially as an inactive proenzyme. Formation of the active enzyme involves a self-maturation process in which the active site pyruvoyl group is generated from an internal serine residue via an autocatalytic post-translational modification. Two non-identical subunits are generated from the proenzyme in this reaction, and the pyruvate is formed at the N-terminus of the alpha chain, which is derived from the carboxyl end of the proenzyme. The autoendoproteolytic cleavage occurs by a canonical serine protease mechanism, in which the side chain hydroxyl group of the serine supplies its oxygen atom to form the C-terminus of the beta chain, while the remainder of the serine residue undergoes an oxidative deamination to produce ammonia and the pyruvoyl prosthetic group on the alpha chain. During this reaction, the Ser that is part of the protease active site of the proenzyme becomes the pyruvoyl prosthetic group, which constitutes an essential element of the active site of the mature decarboxylase.

The protein localises to the cell membrane. The catalysed reaction is a 1,2-diacyl-sn-glycero-3-phospho-L-serine + H(+) = a 1,2-diacyl-sn-glycero-3-phosphoethanolamine + CO2. It participates in phospholipid metabolism; phosphatidylethanolamine biosynthesis; phosphatidylethanolamine from CDP-diacylglycerol: step 2/2. Its function is as follows. Catalyzes the formation of phosphatidylethanolamine (PtdEtn) from phosphatidylserine (PtdSer). This is Phosphatidylserine decarboxylase proenzyme from Escherichia fergusonii (strain ATCC 35469 / DSM 13698 / CCUG 18766 / IAM 14443 / JCM 21226 / LMG 7866 / NBRC 102419 / NCTC 12128 / CDC 0568-73).